The sequence spans 390 residues: Formate-dependent phosphoribosylglycinamide formyltransferase (390 aa).

Residues E18–L19 and E78 each bind N(1)-(5-phospho-beta-D-ribosyl)glycinamide. ATP is bound by residues R110, K151, S156 to Q161, E191 to L194, and E199. One can recognise an ATP-grasp domain in the interval D115–L305. E264 and E276 together coordinate Mg(2+). N(1)-(5-phospho-beta-D-ribosyl)glycinamide is bound by residues D283, K353, and R360–R361.

This sequence belongs to the PurK/PurT family. As to quaternary structure, homodimer.

The catalysed reaction is N(1)-(5-phospho-beta-D-ribosyl)glycinamide + formate + ATP = N(2)-formyl-N(1)-(5-phospho-beta-D-ribosyl)glycinamide + ADP + phosphate + H(+). It participates in purine metabolism; IMP biosynthesis via de novo pathway; N(2)-formyl-N(1)-(5-phospho-D-ribosyl)glycinamide from N(1)-(5-phospho-D-ribosyl)glycinamide (formate route): step 1/1. In terms of biological role, involved in the de novo purine biosynthesis. Catalyzes the transfer of formate to 5-phospho-ribosyl-glycinamide (GAR), producing 5-phospho-ribosyl-N-formylglycinamide (FGAR). Formate is provided by PurU via hydrolysis of 10-formyl-tetrahydrofolate. The chain is Formate-dependent phosphoribosylglycinamide formyltransferase from Prochlorococcus marinus subsp. pastoris (strain CCMP1986 / NIES-2087 / MED4).